The following is a 665-amino-acid chain: Methionine--tRNA ligase (665 aa).

A 'HIGH' region motif is present at residues 12 to 22 (YYPSGKLHIGS). The 'KMSKS' region signature appears at 308–312 (KMSKS). Lys311 contacts ATP. One can recognise a tRNA-binding domain in the interval 562-665 (TFDAVEIRVA…SSVPNGSIIG (104 aa)).

This sequence belongs to the class-I aminoacyl-tRNA synthetase family. MetG type 2B subfamily. Homodimer.

The protein resides in the cytoplasm. The catalysed reaction is tRNA(Met) + L-methionine + ATP = L-methionyl-tRNA(Met) + AMP + diphosphate. Functionally, is required not only for elongation of protein synthesis but also for the initiation of all mRNA translation through initiator tRNA(fMet) aminoacylation. This is Methionine--tRNA ligase (metG) from Streptococcus pyogenes serotype M18 (strain MGAS8232).